The sequence spans 1539 residues: Lysine-specific demethylase 5D (1539 aa).

One can recognise a JmjN domain in the interval 14–55; sequence CPVFEPSWAEFQDPLGYIAKIRPIAEKSGICKIRPPADWQPP. Residues 79–169 form the ARID domain; sequence TRVKLNYLDQ…IIYPYEMFQS (91 aa). Residues 192–228 form a disordered region; sequence PHSIPLRQSVQPSKFSSYSRRAKRLQPDPEPTEEDIE. Residues 197–210 are compositionally biased toward polar residues; that stretch reads LRQSVQPSKFSSYS. Glycyl lysine isopeptide (Lys-Gly) (interchain with G-Cter in SUMO2) cross-links involve residues Lys205, Lys229, Lys244, and Lys272. Residues Ser291 and Ser307 each carry the phosphoserine modification. The segment at 316–362 adopts a PHD-type 1 zinc-finger fold; the sequence is ICQVCSRGDEDDKLLFCDGCDDNYHIFCLLPPLPEIPRGIWRCPKCI. Tyr430 serves as a coordination point for 2-oxoglutarate. A JmjC domain is found at 458–624; that stretch reads EYATSGWNLN…AGRQCIEHYR (167 aa). Fe cation-binding residues include His504 and Glu506. 3 residues coordinate 2-oxoglutarate: Ser512, Asn514, and Lys522. His592 contributes to the Fe cation binding site. Residues 697 to 749 form a C5HC2 zinc finger; that stretch reads CIKCKTTCFLSALACYDCPDGLVCLSHINDLCKCSSSRQYLRYRYTLDELPTM. Residue Ser884 is modified to Phosphoserine. The segment at 1174–1235 adopts a PHD-type 2 zinc-finger fold; sequence ICVCGQVPAG…DTKFLCPLCM (62 aa). At Ser1346 the chain carries Phosphoserine. A disordered region spans residues 1429-1521; the sequence is HQGSRTRSRA…QHKDSGSSAA (93 aa). Residues 1432 to 1446 are compositionally biased toward basic residues; that stretch reads SRTRSRALERRRRRQ. Residues 1477-1491 are compositionally biased toward basic and acidic residues; that stretch reads GREEEHYQEKADREN. Polar residues predominate over residues 1494–1521; sequence LTPSTDHSPFLKGNQNSLQHKDSGSSAA.

This sequence belongs to the JARID1 histone demethylase family. Interacts with PCGF6, MSH5, ZMYND8, AR. Requires L-ascorbate as cofactor. The cofactor is Fe(2+). Expression is highly down-regulated in metastatic prostate tumors.

It is found in the nucleus. It carries out the reaction N(6),N(6),N(6)-trimethyl-L-lysyl(4)-[histone H3] + 3 2-oxoglutarate + 3 O2 = L-lysyl(4)-[histone H3] + 3 formaldehyde + 3 succinate + 3 CO2. Functionally, histone demethylase that specifically demethylates 'Lys-4' of histone H3, thereby playing a central role in histone code. Does not demethylate histone H3 'Lys-9', H3 'Lys-27', H3 'Lys-36', H3 'Lys-79' or H4 'Lys-20'. Demethylates trimethylated and dimethylated but not monomethylated H3 'Lys-4'. May play a role in spermatogenesis. Involved in transcriptional repression of diverse metastasis-associated genes; in this function seems to cooperate with ZMYND8. Suppresses prostate cancer cell invasion. Regulates androgen receptor (AR) transcriptional activity by demethylating H3K4me3 active transcription marks. The polypeptide is Lysine-specific demethylase 5D (KDM5D) (Homo sapiens (Human)).